The sequence spans 88 residues: Large ribosomal subunit protein eL37 (88 aa).

C19, C22, C34, and C37 together coordinate Zn(2+). Residues 19–37 form a C4-type zinc finger; that stretch reads CNRCGKRSFHVQKKTCASC.

Belongs to the eukaryotic ribosomal protein eL37 family. Requires Zn(2+) as cofactor.

Its function is as follows. Binds to the 23S rRNA. The chain is Large ribosomal subunit protein eL37 (RPL37) from Debaryomyces hansenii (strain ATCC 36239 / CBS 767 / BCRC 21394 / JCM 1990 / NBRC 0083 / IGC 2968) (Yeast).